The primary structure comprises 121 residues: Trypsin/alpha-amylase inhibitor CMX2 (121 aa).

The first 24 residues, 1–24, serve as a signal peptide directing secretion; that stretch reads MAFKHQLILSTAILLAVLAAASAS.

It belongs to the protease inhibitor I6 (cereal trypsin/alpha-amylase inhibitor) family.

The protein localises to the secreted. This Triticum aestivum (Wheat) protein is Trypsin/alpha-amylase inhibitor CMX2.